A 216-amino-acid chain; its full sequence is Adenylate kinase (216 aa).

10–15 serves as a coordination point for ATP; it reads GAGKGT. Residues 30 to 59 form an NMP region; it reads STGDIFRKNISEKTPLGVKAKEYMDKGQLV. AMP is bound by residues T31, R36, 57–59, 85–88, and Q92; these read QLV and GFPR. Residues 126–163 are LID; the sequence is GRRVCPSCGASYHIKFNPPKIEGLCDVCKKEVIQRKDD. ATP is bound at residue R127. Positions 130 and 133 each coordinate Zn(2+). An ATP-binding site is contributed by 136 to 137; the sequence is SY. Positions 150 and 153 each coordinate Zn(2+). R160 and R171 together coordinate AMP. Q199 is an ATP binding site.

It belongs to the adenylate kinase family. Monomer.

The protein localises to the cytoplasm. The catalysed reaction is AMP + ATP = 2 ADP. Its pathway is purine metabolism; AMP biosynthesis via salvage pathway; AMP from ADP: step 1/1. Catalyzes the reversible transfer of the terminal phosphate group between ATP and AMP. Plays an important role in cellular energy homeostasis and in adenine nucleotide metabolism. This is Adenylate kinase from Clostridium novyi (strain NT).